A 58-amino-acid polypeptide reads, in one-letter code: Alpha-conotoxin-like Pu1.6 (58 aa).

Residues 1 to 17 (MFTVFLLVVLVTTVVFS) form the signal peptide. A propeptide spanning residues 18-35 (TSDHRPASNHENRRASKR) is cleaved from the precursor. Intrachain disulfides connect C44-C50 and C45-C58. Residues 46–48 (TNP) form a lacks the Ser-Xaa-Pro motif that is crucial for potent interaction with nAChR region.

Belongs to the conotoxin A superfamily. As to expression, expressed by the venom duct.

It is found in the secreted. Alpha-conotoxins act on postsynaptic membranes, they bind to the nicotinic acetylcholine receptors (nAChR) and thus inhibit them. Has possibly a distinct nAChR binding mode from other alpha-conotoxins, due to a different three residue motif (lacks the Ser-Xaa-Pro motif). The polypeptide is Alpha-conotoxin-like Pu1.6 (Conus pulicarius (Flea-bitten cone)).